The sequence spans 388 residues: Quinolone resistance protein NorA (388 aa).

Helical transmembrane passes span 5 to 25 (IFVLYFNIFLIFLGIGLVIPV), 42 to 62 (LLVAAFALSQMIISPFGGTLA), 69 to 89 (LIICIGLILFSVSEFMFAVGH), 99 to 119 (VIGGMSAGMVMPGVTGLIADI), 129 to 149 (FGYMSAIINSGFILGPGIGGF), 157 to 177 (MPFYFAGALGILAFIMSIVLI), 201 to 221 (WKVFITPVILTLVLSFGLSAF), 239 to 259 (DISIAITGGGIFGALFQIYFF), 269 to 289 (LTFIAWSLLYSVVVLILLVFA), 293 to 313 (WSIMLISFVVFIGFDMIRPAI), 331 to 351 (LNSTFTSMGNFIGPLIAGALF), and 355 to 375 (IEAPIYMAIGVSLAGVVIVLI).

The protein belongs to the major facilitator superfamily. TCR/Tet family.

Its subcellular location is the cell membrane. In terms of biological role, involved in quinolone resistance. May constitute a membrane-associated active efflux pump of hydrophilic quinolones. The protein is Quinolone resistance protein NorA (norA) of Staphylococcus aureus (strain Mu50 / ATCC 700699).